A 151-amino-acid chain; its full sequence is UPF0178 protein Suden_0449 (151 aa).

This sequence belongs to the UPF0178 family.

The sequence is that of UPF0178 protein Suden_0449 from Sulfurimonas denitrificans (strain ATCC 33889 / DSM 1251) (Thiomicrospira denitrificans (strain ATCC 33889 / DSM 1251)).